The primary structure comprises 221 residues: Small ribosomal subunit protein eS8 (221 aa).

Disordered stretches follow at residues 1 to 41 and 128 to 169; these read MGIS…LSSN and TPAA…TLDP. The span at 8 to 26 shows a compositional bias: basic residues; that stretch reads MHKRRATGGKQKAWRKKRK. The span at 146-169 shows a compositional bias: basic and acidic residues; that stretch reads EETKKSNHVTRKLEKRKEGRTLDP.

Belongs to the eukaryotic ribosomal protein eS8 family.

This chain is Small ribosomal subunit protein eS8 (RPS8), found in Zea mays (Maize).